A 184-amino-acid chain; its full sequence is Cytochrome c homolog (184 aa).

Residues 1 to 10 (MDSFELNKIL) lie on the Cytoplasmic side of the membrane. Residues 11–31 (GAVLGTCLILLVTSFTANALF) traverse the membrane as a helical; Signal-anchor segment. Topologically, residues 32 to 184 (SPKMPEKPGF…HPKPLPTASK (153 aa)) are periplasmic. Residues Cys-84, Cys-87, His-88, and Met-151 each contribute to the heme c site.

It belongs to the cytochrome c family. Binds 1 heme c group covalently per subunit.

The protein resides in the cell membrane. Functionally, may be involved in electron transfer from bc1 complex to aa3. This is Cytochrome c homolog (cycM) from Bradyrhizobium diazoefficiens (strain JCM 10833 / BCRC 13528 / IAM 13628 / NBRC 14792 / USDA 110).